Reading from the N-terminus, the 418-residue chain is AP-3 complex subunit mu-1 (418 aa).

An MHD domain is found at N176 to R417.

This sequence belongs to the adaptor complexes medium subunit family. Adaptor protein complex 3 (AP-3) is a heterotetramer composed of two large adaptins (delta-type subunit AP3D1 and beta-type subunit AP3B1 or AP3B2), a medium adaptin (mu-type subunit AP3M1 or AP3M2) and a small adaptin (sigma-type subunit APS1 or AP3S2). Interacts with AGAP1. AP-3 associates with the BLOC-1 complex.

It localises to the golgi apparatus. The protein localises to the cytoplasmic vesicle membrane. Its function is as follows. Part of the AP-3 complex, an adaptor-related complex which is not clathrin-associated. The complex is associated with the Golgi region as well as more peripheral structures. It facilitates the budding of vesicles from the Golgi membrane and may be directly involved in trafficking to lysosomes. In concert with the BLOC-1 complex, AP-3 is required to target cargos into vesicles assembled at cell bodies for delivery into neurites and nerve terminals. The polypeptide is AP-3 complex subunit mu-1 (Ap3m1) (Mus musculus (Mouse)).